A 387-amino-acid polypeptide reads, in one-letter code: 3-dehydroquinate synthase (387 aa).

This sequence belongs to the archaeal-type DHQ synthase family.

The catalysed reaction is 2-amino-2,3,7-trideoxy-D-lyxo-hept-6-ulosonate + NAD(+) + H2O = 3-dehydroquinate + NH4(+) + NADH + H(+). Its function is as follows. Catalyzes the oxidative deamination and cyclization of 2-amino-3,7-dideoxy-D-threo-hept-6-ulosonic acid (ADH) to yield 3-dehydroquinate (DHQ), which is fed into the canonical shikimic pathway of aromatic amino acid biosynthesis. This Halobacterium salinarum (strain ATCC 29341 / DSM 671 / R1) protein is 3-dehydroquinate synthase.